Here is a 451-residue protein sequence, read N- to C-terminus: Chromosomal replication initiator protein DnaA (451 aa).

Residues 1 to 82 are domain I, interacts with DnaA modulators; the sequence is MENSLWKQCL…RLELQIGSSA (82 aa). Positions 82–114 are domain II; sequence AVVAPPRRRQVSVTTPSPSAAADQTPATRSAAS. A disordered region spans residues 85–112; sequence APPRRRQVSVTTPSPSAAADQTPATRSA. A domain III, AAA+ region region spans residues 115–331; it reads NLNSNFTFDT…GALRRVVANA (217 aa). ATP-binding residues include G159, G161, K162, and T163. The domain IV, binds dsDNA stretch occupies residues 332-451; the sequence is QFTGQEITVE…YSNLLRTLST (120 aa).

It belongs to the DnaA family. Oligomerizes as a right-handed, spiral filament on DNA at oriC.

It localises to the cytoplasm. In terms of biological role, plays an essential role in the initiation and regulation of chromosomal replication. ATP-DnaA binds to the origin of replication (oriC) to initiate formation of the DNA replication initiation complex once per cell cycle. Binds the DnaA box (a 9 base pair repeat at the origin) and separates the double-stranded (ds)DNA. Forms a right-handed helical filament on oriC DNA; dsDNA binds to the exterior of the filament while single-stranded (ss)DNA is stabiized in the filament's interior. The ATP-DnaA-oriC complex binds and stabilizes one strand of the AT-rich DNA unwinding element (DUE), permitting loading of DNA polymerase. After initiation quickly degrades to an ADP-DnaA complex that is not apt for DNA replication. Binds acidic phospholipids. This is Chromosomal replication initiator protein DnaA from Alkalilimnicola ehrlichii (strain ATCC BAA-1101 / DSM 17681 / MLHE-1).